We begin with the raw amino-acid sequence, 341 residues long: Fructose-1,6-bisphosphatase class 1 1 (341 aa).

Positions 92, 114, 116, and 117 each coordinate Mg(2+). Residues 117–120 (DGSS), Asn209, and Lys275 contribute to the substrate site. Glu281 serves as a coordination point for Mg(2+).

Belongs to the FBPase class 1 family. As to quaternary structure, homotetramer. Mg(2+) serves as cofactor.

The protein resides in the cytoplasm. The catalysed reaction is beta-D-fructose 1,6-bisphosphate + H2O = beta-D-fructose 6-phosphate + phosphate. Its pathway is carbohydrate biosynthesis; gluconeogenesis. The protein is Fructose-1,6-bisphosphatase class 1 1 of Leptothrix cholodnii (strain ATCC 51168 / LMG 8142 / SP-6) (Leptothrix discophora (strain SP-6)).